The following is a 439-amino-acid chain: C4-dicarboxylate transport protein (439 aa).

The next 9 helical transmembrane spans lie at 10–30, 45–65, 77–97, 145–165, 185–205, 223–243, 290–310, 332–352, and 353–373; these read LYVQVLAAIVIGVVLGHFYPP, LIKMIIAPVIFCTVVLGIAGM, LALLYFEIVSTLALIVGLVLV, AFAKGDILQVLLISVLFGFAL, VLFAIVGTIMKAAPIGAFGAM, LMGTFYLTCLFFIFAVLGTIT, VVGLVIPTGYSFNLDGTAIYL, TLLAVLLLTSKGAAGITGSGF, and IVLAASLSAVGHLPVAGLALI. The segment at 415–439 is disordered; it reads LNGQTAEEASAPQALPDRMESRIHH.

This sequence belongs to the dicarboxylate/amino acid:cation symporter (DAACS) (TC 2.A.23) family.

The protein localises to the cell inner membrane. Its function is as follows. Responsible for the transport of dicarboxylates such as succinate, fumarate, and malate from the periplasm across the membrane. This Verminephrobacter eiseniae (strain EF01-2) protein is C4-dicarboxylate transport protein.